A 355-amino-acid polypeptide reads, in one-letter code: uncharacterized protein (355 aa).

The disordered stretch occupies residues 1-61; the sequence is MNKKIEKNNN…PKRRGRRPKK (61 aa). A compositionally biased stretch (polar residues) spans 18 to 37; sequence YESNTTDNQLIMKKNANSGS.

This is an uncharacterized protein from Acanthamoeba polyphaga mimivirus (APMV).